A 209-amino-acid polypeptide reads, in one-letter code: Guanylate kinase (209 aa).

Residues 7 to 185 (GNLYIVAAPS…AAMELQSIVI (179 aa)) form the Guanylate kinase-like domain. Residue 14-21 (APSGGGKT) participates in ATP binding.

Belongs to the guanylate kinase family.

The protein localises to the cytoplasm. The enzyme catalyses GMP + ATP = GDP + ADP. Its function is as follows. Essential for recycling GMP and indirectly, cGMP. This Legionella pneumophila (strain Lens) protein is Guanylate kinase.